The primary structure comprises 248 residues: Proteasome subunit alpha (248 aa).

Belongs to the peptidase T1A family. The 20S proteasome core is composed of 14 alpha and 14 beta subunits that assemble into four stacked heptameric rings, resulting in a barrel-shaped structure. The two inner rings, each composed of seven catalytic beta subunits, are sandwiched by two outer rings, each composed of seven alpha subunits. The catalytic chamber with the active sites is on the inside of the barrel. Has a gated structure, the ends of the cylinder being occluded by the N-termini of the alpha-subunits. Is capped by the proteasome-associated ATPase, ARC.

The protein resides in the cytoplasm. The protein operates within protein degradation; proteasomal Pup-dependent pathway. Its activity is regulated as follows. The formation of the proteasomal ATPase ARC-20S proteasome complex, likely via the docking of the C-termini of ARC into the intersubunit pockets in the alpha-rings, may trigger opening of the gate for substrate entry. Interconversion between the open-gate and close-gate conformations leads to a dynamic regulation of the 20S proteasome proteolysis activity. Functionally, component of the proteasome core, a large protease complex with broad specificity involved in protein degradation. This chain is Proteasome subunit alpha, found in Mycobacterium tuberculosis (strain ATCC 25177 / H37Ra).